The chain runs to 135 residues: Transcription antitermination protein NusB (135 aa).

Belongs to the NusB family.

In terms of biological role, involved in transcription antitermination. Required for transcription of ribosomal RNA (rRNA) genes. Binds specifically to the boxA antiterminator sequence of the ribosomal RNA (rrn) operons. This is Transcription antitermination protein NusB from Bdellovibrio bacteriovorus (strain ATCC 15356 / DSM 50701 / NCIMB 9529 / HD100).